Consider the following 546-residue polypeptide: Chaperonin GroEL 1 (546 aa).

Residues 30 to 33 (TLGP), K51, 87 to 91 (DGTTT), G415, and D495 contribute to the ATP site. Residues 527–546 (DAAPTAAPGGPGAGGPGFDF) are disordered. The segment covering 535 to 546 (GGPGAGGPGFDF) has biased composition (gly residues).

The protein belongs to the chaperonin (HSP60) family. Forms a cylinder of 14 subunits composed of two heptameric rings stacked back-to-back. Interacts with the co-chaperonin GroES.

Its subcellular location is the cytoplasm. It catalyses the reaction ATP + H2O + a folded polypeptide = ADP + phosphate + an unfolded polypeptide.. Functionally, together with its co-chaperonin GroES, plays an essential role in assisting protein folding. The GroEL-GroES system forms a nano-cage that allows encapsulation of the non-native substrate proteins and provides a physical environment optimized to promote and accelerate protein folding. This is Chaperonin GroEL 1 from Burkholderia lata (strain ATCC 17760 / DSM 23089 / LMG 22485 / NCIMB 9086 / R18194 / 383).